The chain runs to 184 residues: Thymidine kinase (184 aa).

ATP contacts are provided by residues 15-22 (GPMFSGKS) and 89-92 (DEIQ). Glutamate 90 acts as the Proton acceptor in catalysis. Residues cysteine 146, cysteine 149, cysteine 178, and cysteine 181 each contribute to the Zn(2+) site.

Belongs to the thymidine kinase family. As to quaternary structure, homotetramer.

Its subcellular location is the cytoplasm. The catalysed reaction is thymidine + ATP = dTMP + ADP + H(+). This chain is Thymidine kinase, found in Mesomycoplasma hyopneumoniae (strain 232) (Mycoplasma hyopneumoniae).